Reading from the N-terminus, the 342-residue chain is Dihydroorotase (342 aa).

2 residues coordinate Zn(2+): H13 and H15. Substrate-binding positions include 15-17 (HLR) and N41. Positions 99, 136, and 174 each coordinate Zn(2+). Position 99 is an N6-carboxylysine (K99). Substrate is bound at residue H136. L218 is a substrate binding site. Zn(2+) is bound at residue D246. D246 is a catalytic residue. Residues H250 and A262 each contribute to the substrate site.

This sequence belongs to the metallo-dependent hydrolases superfamily. DHOase family. Class II DHOase subfamily. Homodimer. Requires Zn(2+) as cofactor.

The enzyme catalyses (S)-dihydroorotate + H2O = N-carbamoyl-L-aspartate + H(+). It participates in pyrimidine metabolism; UMP biosynthesis via de novo pathway; (S)-dihydroorotate from bicarbonate: step 3/3. Catalyzes the reversible cyclization of carbamoyl aspartate to dihydroorotate. The polypeptide is Dihydroorotase (Synechocystis sp. (strain ATCC 27184 / PCC 6803 / Kazusa)).